Consider the following 201-residue polypeptide: FMN-dependent NADH:quinone oxidoreductase (201 aa).

Residues Ser-10, 16 to 18, 96 to 99, and 140 to 143 each bind FMN; these read SQS, MYNF, and SRGG.

The protein belongs to the azoreductase type 1 family. Homodimer. It depends on FMN as a cofactor.

It carries out the reaction 2 a quinone + NADH + H(+) = 2 a 1,4-benzosemiquinone + NAD(+). The catalysed reaction is N,N-dimethyl-1,4-phenylenediamine + anthranilate + 2 NAD(+) = 2-(4-dimethylaminophenyl)diazenylbenzoate + 2 NADH + 2 H(+). Its function is as follows. Quinone reductase that provides resistance to thiol-specific stress caused by electrophilic quinones. Also exhibits azoreductase activity. Catalyzes the reductive cleavage of the azo bond in aromatic azo compounds to the corresponding amines. This Yersinia pseudotuberculosis serotype O:1b (strain IP 31758) protein is FMN-dependent NADH:quinone oxidoreductase.